We begin with the raw amino-acid sequence, 550 residues long: Arginine--tRNA ligase (550 aa).

A 'HIGH' region motif is present at residues 125–135 (ANPTGPLHIGH).

This sequence belongs to the class-I aminoacyl-tRNA synthetase family. Monomer.

The protein localises to the cytoplasm. It catalyses the reaction tRNA(Arg) + L-arginine + ATP = L-arginyl-tRNA(Arg) + AMP + diphosphate. The polypeptide is Arginine--tRNA ligase (Lawsonia intracellularis (strain PHE/MN1-00)).